The sequence spans 429 residues: Protein cereblon (429 aa).

The tract at residues 1–30 (MGNHLPLLPAESEEEDEMEVEDQDSKEAKK) is disordered. A compositionally biased stretch (acidic residues) spans 11–22 (ESEEEDEMEVED). The residue at position 12 (Ser-12) is a Phosphoserine. Positions 68–306 (IPVLPQVMMI…CELDIMNKCT (239 aa)) constitute a Lon N-terminal domain. In terms of domain architecture, CULT spans 305-413 (CTSLCCKQCQ…LTRSALLPTI (109 aa)). Zn(2+) is bound by residues Cys-310 and Cys-313. His-365, Trp-367, and Trp-373 together coordinate (S)-thalidomide. Residues Cys-378 and Cys-381 each contribute to the Zn(2+) site.

The protein belongs to the CRBN family. In terms of assembly, component of a DCX (DDB1-CUL4-X-box) protein ligase complex, at least composed of CRBN, CUL4A, DDB1 and RBX1. Interacts directly with DDB1. Interacts with KCNT1. Interacts with ILF2. Interacts with TRAF6 and ECSIT. Post-translationally, ubiquitinated, ubiquitination is mediated by its own DCX protein ligase complex.

It localises to the cytoplasm. The protein resides in the nucleus. Its subcellular location is the membrane. The protein operates within protein modification; protein ubiquitination. Substrate recognition component of a DCX (DDB1-CUL4-X-box) E3 protein ligase complex that mediates the ubiquitination and subsequent proteasomal degradation of target proteins, such as MEIS2, ILF2 or GLUL. Normal degradation of key regulatory proteins is required for normal limb outgrowth and expression of the fibroblast growth factor FGF8. Maintains presynaptic glutamate release and consequently cognitive functions, such as memory and learning, by negatively regulating large-conductance calcium-activated potassium (BK) channels in excitatory neurons. Likely to function by regulating the assembly and neuronal surface expression of BK channels via its interaction with KCNT1. May also be involved in regulating anxiety-like behaviors via a BK channel-independent mechanism. Plays a negative role in TLR4 signaling by interacting with TRAF6 and ECSIT, leading to inhibition of ECSIT ubiquitination, an important step of the signaling. The sequence is that of Protein cereblon (CRBN) from Pongo abelii (Sumatran orangutan).